The sequence spans 551 residues: MNRRRFIKASLALAAACGTPGLATLFSRNAWAQESDIADGQTRAFDFSVLQAMASELAQKPWGGAPRPLPDTLAKLTPQAYNSIQYDAGHSLWNNIEGRQLDVQFFHVGMGFRRRVRMFSLDPATRQAREVHFRPELFNYHDAGVDTRQLEGQTDLGFAGFRAFKAPELARRDIVSFLGASYFRAVDSTFQYGLSARGLAVDTFTDTPEEFPDFTAFWFETPKAQDTTFVAYALLDSPSVTGAYKFIIHCESSQVIMEVENFLFARKDIKQLGIAPMTSMFSCGTNERRMCDTIHPQIHDSDRLAMWRGNGEWVCRPLNNPQRLQFNAFSDENPKGFGLLQTDHKFESYQDVMGWYNKRPSLWVEPRNRWGKGTVALMEIPTTGETLDNIVCFWQPEKPIRAGDKLNFQYRLYWSGDAPVRTPLARVYATRTGMGSFPEGWAPGENFPTQWSRRVAVDFVGGDLKGAAPRGIEPVITLSSGEAKQVEILYVEPFDGYRIQFDWYPTSDSVDPVEMRMFLRCQGEAISETWLWQYFPPAPDKRKYVDDRQMR.

The segment at residues 1–32 (MNRRRFIKASLALAAACGTPGLATLFSRNAWA) is a signal peptide (tat-type signal).

It belongs to the OpgD/OpgG family. Predicted to be exported by the Tat system. The position of the signal peptide cleavage has not been experimentally proven.

It localises to the periplasm. Its pathway is glycan metabolism; osmoregulated periplasmic glucan (OPG) biosynthesis. Functionally, probably involved in the control of the structural glucose backbone of osmoregulated periplasmic glucans (OPGs). The chain is Glucans biosynthesis protein D from Cronobacter sakazakii (strain ATCC BAA-894) (Enterobacter sakazakii).